We begin with the raw amino-acid sequence, 124 residues long: Fluoride-specific ion channel FluC (124 aa).

Helical transmembrane passes span 4–24, 35–55, 67–87, and 96–116; these read IVLL…LAGL, LGTF…WGVC, VVLL…TFES, and WLAF…LLWL. Residues Gly-75 and Thr-78 each contribute to the Na(+) site.

Belongs to the fluoride channel Fluc/FEX (TC 1.A.43) family.

Its subcellular location is the cell inner membrane. The enzyme catalyses fluoride(in) = fluoride(out). Na(+) is not transported, but it plays an essential structural role and its presence is essential for fluoride channel function. Its function is as follows. Fluoride-specific ion channel. Important for reducing fluoride concentration in the cell, thus reducing its toxicity. This chain is Fluoride-specific ion channel FluC, found in Nitratidesulfovibrio vulgaris (strain DSM 19637 / Miyazaki F) (Desulfovibrio vulgaris).